We begin with the raw amino-acid sequence, 324 residues long: Putative S-adenosyl-L-methionine-dependent methyltransferase MMAR_1059 (324 aa).

Residues D138 and 167–168 each bind S-adenosyl-L-methionine; that span reads DL.

It belongs to the UPF0677 family.

Exhibits S-adenosyl-L-methionine-dependent methyltransferase activity. The protein is Putative S-adenosyl-L-methionine-dependent methyltransferase MMAR_1059 of Mycobacterium marinum (strain ATCC BAA-535 / M).